The following is a 278-amino-acid chain: 4-deoxy-L-threo-5-hexosulose-uronate ketol-isomerase (278 aa).

Residues His196, His198, Glu203, and His245 each coordinate Zn(2+).

Belongs to the KduI family. Zn(2+) is required as a cofactor.

The catalysed reaction is 5-dehydro-4-deoxy-D-glucuronate = 3-deoxy-D-glycero-2,5-hexodiulosonate. It functions in the pathway glycan metabolism; pectin degradation; 2-dehydro-3-deoxy-D-gluconate from pectin: step 4/5. Catalyzes the isomerization of 5-dehydro-4-deoxy-D-glucuronate to 3-deoxy-D-glycero-2,5-hexodiulosonate. The protein is 4-deoxy-L-threo-5-hexosulose-uronate ketol-isomerase of Shigella boydii serotype 4 (strain Sb227).